The chain runs to 177 residues: Translation initiation factor IF-3 (177 aa).

The protein belongs to the IF-3 family. In terms of assembly, monomer.

The protein localises to the cytoplasm. Its function is as follows. IF-3 binds to the 30S ribosomal subunit and shifts the equilibrium between 70S ribosomes and their 50S and 30S subunits in favor of the free subunits, thus enhancing the availability of 30S subunits on which protein synthesis initiation begins. The chain is Translation initiation factor IF-3 from Rhizobium meliloti (strain 1021) (Ensifer meliloti).